Reading from the N-terminus, the 305-residue chain is Dermonecrotic toxin LrSicTox-alphaIA1ii (305 aa).

Positions 1-18 (MLLYVTLILGCWSAFSES) are cleaved as a signal peptide. Residues 19–26 (AETDVAER) constitute a propeptide that is removed on maturation. The active site involves His37. Mg(2+)-binding residues include Glu57 and Asp59. The Nucleophile role is filled by His73. 2 disulfides stabilise this stretch: Cys77/Cys83 and Cys79/Cys222. Asp117 is a binding site for Mg(2+). Asn282 carries an N-linked (GlcNAc...) asparagine glycan.

This sequence belongs to the arthropod phospholipase D family. Class II subfamily. Class IIa sub-subfamily. It depends on Mg(2+) as a cofactor. Expressed by the venom gland.

It localises to the secreted. It carries out the reaction an N-(acyl)-sphingosylphosphocholine = an N-(acyl)-sphingosyl-1,3-cyclic phosphate + choline. The enzyme catalyses an N-(acyl)-sphingosylphosphoethanolamine = an N-(acyl)-sphingosyl-1,3-cyclic phosphate + ethanolamine. The catalysed reaction is a 1-acyl-sn-glycero-3-phosphocholine = a 1-acyl-sn-glycero-2,3-cyclic phosphate + choline. It catalyses the reaction a 1-acyl-sn-glycero-3-phosphoethanolamine = a 1-acyl-sn-glycero-2,3-cyclic phosphate + ethanolamine. With respect to regulation, inhibited with low affinity by edelfosine. Its function is as follows. Dermonecrotic toxins cleave the phosphodiester linkage between the phosphate and headgroup of certain phospholipids (sphingolipid and lysolipid substrates), forming an alcohol (often choline) and a cyclic phosphate. This toxin acts on sphingomyelin (SM). It also acts on a broad range of lysophospholipids, like lysophosphatidylinositol (LPI), lysophosphatidylglycerol (LPG), lysophosphatidylethanolamine (LPE), lysobisphosphatidic acid (LBPA), lysophosphatidylserine (LPS) and lysophosphatidylcholines (LPC) of varying chain lengths. The substrate preference is LPI &gt; LPG &gt; LPS &gt; LPC &gt;&gt; LPE, LBPA. Furthermore, the enzyme also act on cyclic phosphatidic acid and lyso-platelet activating factor (LPAF, an alkyl-LPC). The enzyme does not act on sphingosylphosphorylcholine (SPC, also known as lyso-sphingomyelin) and PAF. The toxin may also act on ceramide phosphoethanolamine (CPE). It acts by transphosphatidylation, releasing exclusively cyclic phosphate products as second products. It does not exhibit detectable PLA1/2 activity. It induces dose-dependent hemolysis and dermonecrosis. Also induces increased vascular permeability, edema, inflammatory response, and platelet aggregation. The protein is Dermonecrotic toxin LrSicTox-alphaIA1ii of Loxosceles reclusa (Brown recluse spider).